The following is a 304-amino-acid chain: 1D-myo-inositol 2-acetamido-2-deoxy-alpha-D-glucopyranoside deacetylase 2 (304 aa).

3 residues coordinate Zn(2+): H17, D20, and H152.

Belongs to the MshB deacetylase family. Zn(2+) serves as cofactor.

The catalysed reaction is 1D-myo-inositol 2-acetamido-2-deoxy-alpha-D-glucopyranoside + H2O = 1D-myo-inositol 2-amino-2-deoxy-alpha-D-glucopyranoside + acetate. Its function is as follows. Catalyzes the deacetylation of 1D-myo-inositol 2-acetamido-2-deoxy-alpha-D-glucopyranoside (GlcNAc-Ins) in the mycothiol biosynthesis pathway. The chain is 1D-myo-inositol 2-acetamido-2-deoxy-alpha-D-glucopyranoside deacetylase 2 from Catenulispora acidiphila (strain DSM 44928 / JCM 14897 / NBRC 102108 / NRRL B-24433 / ID139908).